The primary structure comprises 1147 residues: Cellulose synthase-like protein D3 (1147 aa).

2 disordered regions span residues 1-33 (MSTG…PAGQ) and 259-281 (KLGG…PFKP). Composition is skewed to gly residues over residues 14 to 29 (GGVG…GPRG) and 262 to 272 (GDGGGGGGGGP). 2 helical membrane-spanning segments follow: residues 292–312 (VISP…FYLT) and 322–342 (ALWL…SWLL). Active-site residues include aspartate 422 and aspartate 847. Helical transmembrane passes span 929-949 (IFLL…FFIV), 954-974 (IAFL…GILE), 1001-1021 (LYAV…SFTL), 1045-1065 (LLIP…FAFA), 1075-1095 (WGKF…LNPF), and 1108-1128 (TIVF…WVAI).

It belongs to the glycosyltransferase 2 family. Plant cellulose synthase-like D subfamily.

The protein resides in the golgi apparatus membrane. In terms of biological role, thought to be a Golgi-localized beta-glycan synthase that polymerize the backbones of noncellulosic polysaccharides (hemicelluloses) of plant cell wall. The chain is Cellulose synthase-like protein D3 (CSLD3) from Oryza sativa subsp. japonica (Rice).